Consider the following 259-residue polypeptide: Thiazole synthase (259 aa).

The active-site Schiff-base intermediate with DXP is the lysine 100. Residues glycine 161, 187-188 (AG), and 209-210 (AS) contribute to the 1-deoxy-D-xylulose 5-phosphate site.

Belongs to the ThiG family. As to quaternary structure, homotetramer. Forms heterodimers with either ThiH or ThiS.

It is found in the cytoplasm. It carries out the reaction [ThiS sulfur-carrier protein]-C-terminal-Gly-aminoethanethioate + 2-iminoacetate + 1-deoxy-D-xylulose 5-phosphate = [ThiS sulfur-carrier protein]-C-terminal Gly-Gly + 2-[(2R,5Z)-2-carboxy-4-methylthiazol-5(2H)-ylidene]ethyl phosphate + 2 H2O + H(+). Its pathway is cofactor biosynthesis; thiamine diphosphate biosynthesis. Functionally, catalyzes the rearrangement of 1-deoxy-D-xylulose 5-phosphate (DXP) to produce the thiazole phosphate moiety of thiamine. Sulfur is provided by the thiocarboxylate moiety of the carrier protein ThiS. In vitro, sulfur can be provided by H(2)S. The chain is Thiazole synthase from Salinispora arenicola (strain CNS-205).